The primary structure comprises 95 residues: Large ribosomal subunit protein bL25 (95 aa).

It belongs to the bacterial ribosomal protein bL25 family. Part of the 50S ribosomal subunit; part of the 5S rRNA/L5/L18/L25 subcomplex. Contacts the 5S rRNA. Binds to the 5S rRNA independently of L5 and L18.

This is one of the proteins that binds to the 5S RNA in the ribosome where it forms part of the central protuberance. In Haemophilus ducreyi (strain 35000HP / ATCC 700724), this protein is Large ribosomal subunit protein bL25.